Here is a 1485-residue protein sequence, read N- to C-terminus: Putative E3 ubiquitin-protein ligase LIN-2 (1485 aa).

The span at 337 to 353 shows a compositional bias: acidic residues; sequence EENEDDSDSELDNESVD. Disordered stretches follow at residues 337 to 363, 384 to 450, and 462 to 507; these read EENEDDSDSELDNESVDSDDKNNIFSP, NQIP…ISNA, and RKND…KLSM. The segment covering 438–450 has biased composition (low complexity); the sequence is SSPDISIDNISNA. Residues 466-484 are compositionally biased toward polar residues; that stretch reads SQTPSMNQDNENSLVLNDS. The U-box domain maps to 510–585; that stretch reads KPPKDFVCPI…TSWKEQNPEL (76 aa). 4 WD repeats span residues 1194–1232, 1246–1283, 1409–1448, and 1454–1485; these read SCKEVVELDLSSNGEVLSLHYLNGQVLSGLMDGTSKVCD, EHTKAVTSLCSSGDRLYSASLDKTIRVWTIKSDGIKCI, SLSTGLDIHRIAINSDFIFAGTKFGTIEVWLKDKFTRVAS, and GHTKITSLVSDVDGMMLFVGSSDGKIQVWALD.

It carries out the reaction S-ubiquitinyl-[E2 ubiquitin-conjugating enzyme]-L-cysteine + [acceptor protein]-L-lysine = [E2 ubiquitin-conjugating enzyme]-L-cysteine + N(6)-ubiquitinyl-[acceptor protein]-L-lysine.. It functions in the pathway protein modification; protein ubiquitination. Its function is as follows. Putative E3 ubiquitin-protein ligase involved in the rhizobial infection process. Plays an important role in the early steps of infection thread formation and in growth and differentiation of nodules. The protein is Putative E3 ubiquitin-protein ligase LIN-2 of Lotus japonicus (Lotus corniculatus var. japonicus).